The primary structure comprises 302 residues: Probable 2-(5''-triphosphoribosyl)-3'-dephosphocoenzyme-A synthase (302 aa).

Belongs to the CitG/MdcB family.

The enzyme catalyses 3'-dephospho-CoA + ATP = 2'-(5''-triphospho-alpha-D-ribosyl)-3'-dephospho-CoA + adenine. This chain is Probable 2-(5''-triphosphoribosyl)-3'-dephosphocoenzyme-A synthase, found in Citrobacter koseri (strain ATCC BAA-895 / CDC 4225-83 / SGSC4696).